The primary structure comprises 164 residues: HTH-type transcriptional regulator IscR (164 aa).

Positions 2–131 (RLTSKGRYAV…NNITLAELVN (130 aa)) constitute an HTH rrf2-type domain. The H-T-H motif DNA-binding region spans 28-51 (LADISERQGISLSYLEQLFSRLRK). [2Fe-2S] cluster-binding residues include Cys92, Cys98, and Cys104. The interval 143–164 (NNDTRRTANGRPQETINVNLRA) is disordered. Over residues 152 to 164 (GRPQETINVNLRA) the composition is skewed to polar residues.

It depends on [2Fe-2S] cluster as a cofactor.

Functionally, regulates the transcription of several operons and genes involved in the biogenesis of Fe-S clusters and Fe-S-containing proteins. This is HTH-type transcriptional regulator IscR from Yersinia enterocolitica serotype O:8 / biotype 1B (strain NCTC 13174 / 8081).